Consider the following 147-residue polypeptide: Membrane-spanning 4-domains subfamily A member 6E (147 aa).

Residues 1–52 (MTSQPISNETIIMLPSNVINFSQAEKPEPTNQGQDSLKKRLQAKVKVIGVHS) lie on the Cytoplasmic side of the membrane. A helical transmembrane segment spans residues 53 to 73 (SLAGSILSALSALVGFILLSV). Residues 74–120 (NPAALNPASLQCKLDEKDIPTRLLLSYDYHSPYTMDCHRAKASLAGT) lie on the Extracellular side of the membrane. The helical transmembrane segment at 121–141 (LSLMLVSTVLEFCLAVLTAVL) threads the bilayer. Residues 142-147 (QWKQTV) are Cytoplasmic-facing.

This sequence belongs to the MS4A family. In terms of tissue distribution, expressed by malignant and fetal tissue at very low levels.

It is found in the membrane. May be involved in signal transduction as a component of a multimeric receptor complex. The protein is Membrane-spanning 4-domains subfamily A member 6E (MS4A6E) of Homo sapiens (Human).